A 294-amino-acid chain; its full sequence is 33 kDa chaperonin (294 aa).

2 disulfide bridges follow: C239–C241 and C272–C275.

This sequence belongs to the HSP33 family. Under oxidizing conditions two disulfide bonds are formed involving the reactive cysteines. Under reducing conditions zinc is bound to the reactive cysteines and the protein is inactive.

It localises to the cytoplasm. Redox regulated molecular chaperone. Protects both thermally unfolding and oxidatively damaged proteins from irreversible aggregation. Plays an important role in the bacterial defense system toward oxidative stress. In Lacticaseibacillus casei (strain BL23) (Lactobacillus casei), this protein is 33 kDa chaperonin.